We begin with the raw amino-acid sequence, 619 residues long: Translation initiation factor IF-2 (619 aa).

Composition is skewed to low complexity over residues 1–18 and 98–111; these read MTLNKKTNNENSSKTTPK and PPQLQPQTPSLTKT. 2 disordered regions span residues 1–24 and 90–113; these read MTLNKKTNNENSSKTTPKLSKETD and SEPQEKHTPPQLQPQTPSLTKTKP. Residues 121-289 enclose the tr-type G domain; it reads KKSPIVTIMG…ILLVSEIQNL (169 aa). The G1 stretch occupies residues 130 to 137; that stretch reads GHVDHGKT. 130 to 137 contributes to the GTP binding site; the sequence is GHVDHGKT. The tract at residues 155–159 is G2; sequence GITQH. The tract at residues 176 to 179 is G3; it reads DTPG. Residues 176–180 and 230–233 contribute to the GTP site; these read DTPGH and NKID. The tract at residues 230-233 is G4; sequence NKID. Residues 266-268 are G5; sequence SAL.

The protein belongs to the TRAFAC class translation factor GTPase superfamily. Classic translation factor GTPase family. IF-2 subfamily.

The protein localises to the cytoplasm. Its function is as follows. One of the essential components for the initiation of protein synthesis. Protects formylmethionyl-tRNA from spontaneous hydrolysis and promotes its binding to the 30S ribosomal subunits. Also involved in the hydrolysis of GTP during the formation of the 70S ribosomal complex. The sequence is that of Translation initiation factor IF-2 from Onion yellows phytoplasma (strain OY-M).